A 375-amino-acid polypeptide reads, in one-letter code: Trans-enoyl reductase cghC (375 aa).

48 to 51 (VDTK) contacts NADP(+). 135–142 (NAWYTSGW) is a substrate binding site. NADP(+) is bound by residues 188–191 (SSST), 211–214 (SARN), and 276–277 (LD). 297–301 (GPELV) is a binding site for substrate. Residue 366 to 367 (VS) participates in NADP(+) binding.

It belongs to the zinc-containing alcohol dehydrogenase family. Monomer.

The enzyme catalyses (2S,4S)-4-hydroxy-4-methylglutamate + 8 malonyl-CoA + 3 S-adenosyl-L-methionine + ATP + 8 NADPH + 11 H(+) = (2S)-3-[(2S)-3,5-dioxo-4-[(2E,4R,6R,8E,10E,12E)-4,6,12-trimethyltetradeca-2,8,10,12-tetraenoyl]pyrrolidin-2-yl]-2-hydroxy-2-methylpropanoate + AMP + 3 S-adenosyl-L-homocysteine + 8 CO2 + diphosphate + 8 NADP(+) + 8 CoA + 6 H2O. It participates in secondary metabolite biosynthesis. Its function is as follows. Trans-enoyl reductase; part of the gene cluster that mediates the biosynthesis of the tetramic acid Sch210972, a potential anti-HIV fungal natural product that contains a decalin core. The PKS module of cghG together with the enoylreductase cghC catalyze the formation of the polyketide unit which is then conjugated to 4-hydroxyl-4-methyl glutamate (HMG) by the condensation domain of the cghG NRPS module. One unique structural feature of Sch210972 is the tetramic acid motif proposed to be derived from the non-proteinogenic amino acid HMG, by a Dieckmann-type condensation catalyzed by the reductase domain of cghG. The aldolase cghB catalyzes the aldol condensation of 2 molecules of pyruvic acid to yield the intermediate 4-hydroxyl-4-methyl-2-oxoglutarate (HMOG), which can then be stereoselectively transaminated by an unidentified enzyme to form HMG. The Diels-Alderase cghA then uses the Dieckmann product released by cghG as substrate and catalyzes the Diels-Alder cycloaddition to form the decalin ring of Sch210972. CghA also suppresses the nonenzymatic formation of the alternative stereoisomer. The chain is Trans-enoyl reductase cghC from Chaetomium globosum (strain ATCC 6205 / CBS 148.51 / DSM 1962 / NBRC 6347 / NRRL 1970) (Soil fungus).